The primary structure comprises 321 residues: Serine/threonine-protein phosphatase 4 catalytic subunit 2 (321 aa).

Mn(2+) contacts are provided by D64, H66, D92, and N124. H125 (proton donor) is an active-site residue. Residues H174 and H249 each contribute to the Mn(2+) site.

Belongs to the PPP phosphatase family. PP-4 (PP-X) subfamily. As to quaternary structure, serine/threonine-protein phosphatase 4 (PP4) occurs in different assemblies of the catalytic and one or more regulatory subunits. Mn(2+) is required as a cofactor.

It carries out the reaction O-phospho-L-seryl-[protein] + H2O = L-seryl-[protein] + phosphate. The enzyme catalyses O-phospho-L-threonyl-[protein] + H2O = L-threonyl-[protein] + phosphate. In terms of biological role, protein phosphatase which seems to be involved in larval development but not essential for embryogenesis. This is Serine/threonine-protein phosphatase 4 catalytic subunit 2 from Caenorhabditis elegans.